We begin with the raw amino-acid sequence, 224 residues long: MKKAVVLLSGGMDSAAVIALAQEQGFAVYALSVRYGQRHTSELDAAARVAAAQGVIAHKVVDVDLRSIGGSALTDDIEVPDAGGDGIPVTYVPARNTIMLSLALGWAEVIGANDLFCGVNAVDYSGYPDCRPEFVRAFEVLANLATKAGVEGAGLRVHAPLQFLSKADIVREGVRLGVDFGVTVSCYRADADGRACGHCDACRLRAAGFADAGIPDPTHYAILS.

ATP is bound at residue 8-18; that stretch reads LSGGMDSAAVI. The Zn(2+) site is built by cysteine 186, cysteine 196, cysteine 199, and cysteine 202.

The protein belongs to the QueC family. Zn(2+) is required as a cofactor.

The enzyme catalyses 7-carboxy-7-deazaguanine + NH4(+) + ATP = 7-cyano-7-deazaguanine + ADP + phosphate + H2O + H(+). It functions in the pathway purine metabolism; 7-cyano-7-deazaguanine biosynthesis. In terms of biological role, catalyzes the ATP-dependent conversion of 7-carboxy-7-deazaguanine (CDG) to 7-cyano-7-deazaguanine (preQ(0)). The protein is 7-cyano-7-deazaguanine synthase of Xanthomonas axonopodis pv. citri (strain 306).